We begin with the raw amino-acid sequence, 588 residues long: Aspartate--tRNA ligase (588 aa).

Glu-172 is an L-aspartate binding site. Residues 196-199 are aspartate; the sequence is QLFK. Residue Arg-218 participates in L-aspartate binding. ATP contacts are provided by residues 218-220 and Gln-227; that span reads RDE. Position 449 (His-449) interacts with L-aspartate. Glu-483 is an ATP binding site. Residue Arg-490 coordinates L-aspartate. 535–538 is an ATP binding site; sequence GLDR.

This sequence belongs to the class-II aminoacyl-tRNA synthetase family. Type 1 subfamily. Homodimer.

It is found in the cytoplasm. The enzyme catalyses tRNA(Asp) + L-aspartate + ATP = L-aspartyl-tRNA(Asp) + AMP + diphosphate. Its function is as follows. Catalyzes the attachment of L-aspartate to tRNA(Asp) in a two-step reaction: L-aspartate is first activated by ATP to form Asp-AMP and then transferred to the acceptor end of tRNA(Asp). This chain is Aspartate--tRNA ligase, found in Haemophilus influenzae (strain PittGG).